The chain runs to 215 residues: Small ribosomal subunit protein uS7 (215 aa).

The protein belongs to the universal ribosomal protein uS7 family. Part of the 30S ribosomal subunit.

Its function is as follows. One of the primary rRNA binding proteins, it binds directly to 16S rRNA where it nucleates assembly of the head domain of the 30S subunit. Is located at the subunit interface close to the decoding center. The sequence is that of Small ribosomal subunit protein uS7 from Thermococcus onnurineus (strain NA1).